The following is a 152-amino-acid chain: Large ribosomal subunit protein bL9 (152 aa).

It belongs to the bacterial ribosomal protein bL9 family.

Its function is as follows. Binds to the 23S rRNA. The sequence is that of Large ribosomal subunit protein bL9 from Microcystis aeruginosa (strain NIES-843 / IAM M-2473).